The following is a 152-amino-acid chain: UPF0266 membrane protein YobD (152 aa).

Residues 1–5 lie on the Periplasmic side of the membrane; that stretch reads MTITD. A helical transmembrane segment spans residues 6 to 26; that stretch reads LVLILFIAALLAYALYDQFIM. The Cytoplasmic portion of the chain corresponds to 27-44; that stretch reads PRRNGPTLLSIALLRRGR. A helical transmembrane segment spans residues 45 to 65; it reads IDSVIFVGLVAILIYNNVTSH. Position 66 (Gly-66) is a topological domain, periplasmic. A helical membrane pass occupies residues 67–87; that stretch reads AQMTTWLLSALALMGFYIFWI. Over 88 to 152 the chain is Cytoplasmic; it reads RTPRIIFKQR…KIYKLLIENQ (65 aa).

It belongs to the UPF0266 family.

It localises to the cell inner membrane. This is UPF0266 membrane protein YobD (yobD) from Salmonella typhi.